The chain runs to 673 residues: UvrABC system protein B (673 aa).

Residues Ala-26–Arg-183 enclose the Helicase ATP-binding domain. ATP is bound at residue Gly-39–Thr-46. Positions Tyr-92–Ile-115 match the Beta-hairpin motif. A Helicase C-terminal domain is found at Gln-431–Met-597. Positions Arg-601–Pro-631 are disordered. The span at Gln-618–Lys-630 shows a compositional bias: basic and acidic residues. Positions Ala-635–Ala-670 constitute a UVR domain.

This sequence belongs to the UvrB family. Forms a heterotetramer with UvrA during the search for lesions. Interacts with UvrC in an incision complex.

It localises to the cytoplasm. Functionally, the UvrABC repair system catalyzes the recognition and processing of DNA lesions. A damage recognition complex composed of 2 UvrA and 2 UvrB subunits scans DNA for abnormalities. Upon binding of the UvrA(2)B(2) complex to a putative damaged site, the DNA wraps around one UvrB monomer. DNA wrap is dependent on ATP binding by UvrB and probably causes local melting of the DNA helix, facilitating insertion of UvrB beta-hairpin between the DNA strands. Then UvrB probes one DNA strand for the presence of a lesion. If a lesion is found the UvrA subunits dissociate and the UvrB-DNA preincision complex is formed. This complex is subsequently bound by UvrC and the second UvrB is released. If no lesion is found, the DNA wraps around the other UvrB subunit that will check the other stand for damage. This is UvrABC system protein B from Xanthomonas oryzae pv. oryzae (strain PXO99A).